We begin with the raw amino-acid sequence, 726 residues long: Capsid scaffolding protein (726 aa).

Active-site charge relay system residues include His53, Ser140, and His159. A disordered region spans residues 321–362 (QIGPGAMSSVSQPAAAPYSGAMADSAAQVPSAQPPRIPCPPT). The span at 352–361 (AQPPRIPCPP) shows a compositional bias: pro residues. The interval 365 to 384 (TEMIYVPLGTYNDLVVSAAQ) is interaction with pAP. Disordered regions lie at residues 385 to 427 (ARRG…GRGS), 472 to 492 (RRGGSSGDGAPTTRSTGAPGA), 568 to 644 (RASE…VAPS), and 668 to 726 (GIGA…MSTE). Over residues 402 to 418 (HAQQIVQRETGINSSSP) the composition is skewed to polar residues. Residues 702 to 720 (KLKDSRRAAEKRRAADEFA) show a composition bias toward basic and acidic residues. Positions 706–726 (SRRAAEKRRAADEFARIMSTE) are interaction with major capsid protein.

This sequence belongs to the herpesviridae capsid scaffolding protein family. As to quaternary structure, homomultimer. Interacts with major capsid protein. Exists in a monomer-dimer equilibrium with the dimer being the active species. In terms of processing, capsid scaffolding protein is cleaved by assemblin after formation of the spherical procapsid. As a result, the capsid obtains its mature, icosahedral shape. Cleavages occur at two or more sites: release (R-site) and maturation (M-site).

It is found in the host cytoplasm. The protein localises to the host nucleus. It catalyses the reaction Cleaves -Ala-|-Ser- and -Ala-|-Ala- bonds in the scaffold protein.. Functionally, acts as a scaffold protein by binding major capsid protein in the cytoplasm, inducing the nuclear localization of both proteins. Multimerizes in the nucleus such as major capsid protein forms the icosahedral T=16 capsid. Autocatalytic cleavage releases the assembly protein, and subsequently abolishes interaction with major capsid protein. Cleavages products are evicted from the capsid before or during DNA packaging. Protease that plays an essential role in virion assembly within the nucleus. Catalyzes the cleavage of the assembly protein after formation of the spherical procapsid. By that cleavage, the capsid matures and gains its icosahedral shape. The cleavage sites seem to include -Ala-Ser-, -Ala-Ala-, as well as Ala-Thr bonds. Assemblin and cleavages products are evicted from the capsid before or during DNA packaging. Its function is as follows. Plays a major role in capsid assembly. Acts as a scaffold protein by binding major capsid protein. Multimerizes in the nucleus such as major capsid protein forms the icosahedral T=16 capsid. Cleaved by assemblin after capsid completion. The cleavages products are evicted from the capsid before or during DNA packaging. This chain is Capsid scaffolding protein (UL26), found in Psittacid herpesvirus 1 (isolate Amazon parrot/-/97-0001/1997) (PsHV-1).